A 1238-amino-acid polypeptide reads, in one-letter code: Cryptic loci regulator protein 1 (1238 aa).

Disordered regions lie at residues 133–156 (TQQQ…TEPN), 196–237 (PFSN…PSSI), 277–303 (ASLY…LGSM), 546–568 (QKSV…IDTT), 696–735 (SDNT…PFVH), and 784–824 (TLKE…QSRS). Residues 214–223 (NVKNNSKKTA) show a composition bias toward polar residues. Positions 224-237 (SSVNSNHSSIPSSI) are enriched in low complexity. Residues 291-303 (SSRNTSSYNLGSM) show a composition bias toward polar residues. Over residues 702 to 723 (SLPKPSNSKLSSISSDGDASSN) the composition is skewed to low complexity. Over residues 785 to 796 (LKEDASSTKQAK) the composition is skewed to basic and acidic residues. Polar residues predominate over residues 810-819 (NDVSKNNSGE). A C2H2-type zinc finger spans residues 1062 to 1087 (LNCEVSNCKKCFSNYEDMFKHLQHSH).

In terms of assembly, interacts with clr3.

It is found in the nucleus. Its subcellular location is the chromosome. The protein localises to the centromere. The protein resides in the telomere. Regulates silencing of the mat2 and mat3 loci. Organizes the chromatin structure of the mating-type region where it also participates in establishing the 'cold spot' for recombination. Required for proper positioning of nucleosomes at heterochromatic loci and for transcriptional gene silencing (TGS) function of the Snf2/Hdac-containing repressor complex (SHREC). The sequence is that of Cryptic loci regulator protein 1 (clr1) from Schizosaccharomyces pombe (strain 972 / ATCC 24843) (Fission yeast).